The primary structure comprises 395 residues: MSNVHELNFLKEKIQELKDQGVYRQLPVLEGPNEAESILNGKKVINLSSNNYLGFANHPRLKKAAIEAVEKYGVGSGAVRTIVGNMDIHEILDKKLAEFKREEAVMSFQSGFNCNAGTIQAITEKGDLIISDELNHASIIDGARLSRADKTIFKHADMNNLEEVLKANRDKYRNMLIITDGVFSMDGDIAPLPDIVGLAEKYNAMTYVDDAHGSGVLGESGRGTVDHFGLHGRVDFTIGTLSKAIGVVGGYVAGSATMRDWLSHRGRPLLFSTSLPPAAIAAITEAINMLMTTTEYTDRLWDNAKYFKAKMSQLGFNIGNSQTPITPVIIGDEAKTMEFSRKLLENGVFVSAIVFPTVPKGTGRLRCMVTAGHTKEQLDRAVETFKKVGEEMNLL.

Residue Arg24 coordinates substrate. Residue 111-112 participates in pyridoxal 5'-phosphate binding; that stretch reads GF. Position 136 (His136) interacts with substrate. Residues Ser184, 209 to 212, and 240 to 243 each bind pyridoxal 5'-phosphate; these read DDAH and TLSK. N6-(pyridoxal phosphate)lysine is present on Lys243. Residue Thr357 participates in substrate binding.

This sequence belongs to the class-II pyridoxal-phosphate-dependent aminotransferase family. BioF subfamily. As to quaternary structure, homodimer. It depends on pyridoxal 5'-phosphate as a cofactor.

The catalysed reaction is 6-carboxyhexanoyl-[ACP] + L-alanine + H(+) = (8S)-8-amino-7-oxononanoate + holo-[ACP] + CO2. The protein operates within cofactor biosynthesis; biotin biosynthesis. Its function is as follows. Catalyzes the decarboxylative condensation of pimeloyl-[acyl-carrier protein] and L-alanine to produce 8-amino-7-oxononanoate (AON), [acyl-carrier protein], and carbon dioxide. The sequence is that of 8-amino-7-oxononanoate synthase from Alkaliphilus oremlandii (strain OhILAs) (Clostridium oremlandii (strain OhILAs)).